The primary structure comprises 128 residues: Cholecystokinin B (128 aa).

The N-terminal stretch at 1–20 (MCSGVCICLLLAMLSASSKA) is a signal peptide. A propeptide spanning residues 21-108 (HQATGSLGED…FDQSHRINDR (88 aa)) is cleaved from the precursor. The disordered stretch occupies residues 47 to 67 (YARASSAGQKKSFQRTDGDQR). The residue at position 110 (Y110) is a Sulfotyrosine. Phenylalanine amide is present on F116. A propeptide spanning residues 120 to 128 (SAEEYEYSS) is cleaved from the precursor.

This sequence belongs to the gastrin/cholecystokinin family. In terms of processing, the precursor is cleaved by proteases to produce a number of active cholecystokinins. As to expression, brain and gastrointestinal tract.

It localises to the secreted. This Xenopus laevis (African clawed frog) protein is Cholecystokinin B (cck-b).